A 183-amino-acid chain; its full sequence is MTSKVANTEVAQPYAQALLSIAKSKSLTEEFGTDARTLLNLLTENQQLRNFIDNPFIAAENKKALIKQILSEASPYLRNFLLLLVDKRRIFFLPEILQQYLALLRQLNQTVLAEVTSAVALTEDQQQAVTEKVLALTKARQVELATKVDSDLIGGVIIKVGSQVIDSSIRGQLRRLSLRLSNS.

The protein belongs to the ATPase delta chain family. F-type ATPases have 2 components, F(1) - the catalytic core - and F(0) - the membrane proton channel. F(1) has five subunits: alpha(3), beta(3), gamma(1), delta(1), epsilon(1). CF(0) has four main subunits: a(1), b(1), b'(1) and c(10-14). The alpha and beta chains form an alternating ring which encloses part of the gamma chain. F(1) is attached to F(0) by a central stalk formed by the gamma and epsilon chains, while a peripheral stalk is formed by the delta, b and b' chains.

The protein localises to the cellular thylakoid membrane. Functionally, f(1)F(0) ATP synthase produces ATP from ADP in the presence of a proton or sodium gradient. F-type ATPases consist of two structural domains, F(1) containing the extramembraneous catalytic core and F(0) containing the membrane proton channel, linked together by a central stalk and a peripheral stalk. During catalysis, ATP synthesis in the catalytic domain of F(1) is coupled via a rotary mechanism of the central stalk subunits to proton translocation. Its function is as follows. This protein is part of the stalk that links CF(0) to CF(1). It either transmits conformational changes from CF(0) to CF(1) or is implicated in proton conduction. This Nostoc sp. (strain PCC 7120 / SAG 25.82 / UTEX 2576) protein is ATP synthase subunit delta.